The sequence spans 507 residues: Sugar transport protein 8 (507 aa).

Over 1 to 21 (MAVVISSNGNSKSFDAKMTVY) the chain is Cytoplasmic. A run of 12 helical transmembrane segments spans residues 22–42 (VFICVIIAAVGGLIFGYDIGI), 79–99 (FLQLFTSSLYLAALVASFFAS), 116–136 (IFFLIGVGLAAGAVNIYMLII), 139–159 (ILLGFGVGFGNQAVPLFLSEI), 166–186 (GGLNIVFQLMVTIGILIANIV), 200–220 (IALGGAGIPALILLFGSLLIC), 281–301 (FVIGMLLQFFQQFTGINAIMF), 319–339 (LSAVVTGTINVLSTFVGIFLV), 346–366 (FLLLQSSVHMLICQLVIGIIL), 382–402 (LVVVIFVCVYVMGFAWSWGPL), 419–439 (GFALAVSCNMFFTFVIAQAFL), and 448–468 (GIFFFFSGWIVVMGLFALFFV). Residues 469–507 (PETKGVSIDDMRDSVWKLHWYWKRFMLEEDEHDVEKRTD) are Cytoplasmic-facing.

The protein belongs to the major facilitator superfamily. Sugar transporter (TC 2.A.1.1) family.

The protein resides in the membrane. In terms of biological role, mediates an active uptake of hexoses, probably by sugar/hydrogen symport. The polypeptide is Sugar transport protein 8 (STP8) (Arabidopsis thaliana (Mouse-ear cress)).